A 217-amino-acid polypeptide reads, in one-letter code: Uridylate kinase (217 aa).

Residue 6–10 (KLSGR) participates in ATP binding. G38 serves as a coordination point for UMP. ATP-binding residues include G39 and R43. UMP contacts are provided by residues D60 and 107 to 113 (FQPGQST). Positions 134, 139, and 142 each coordinate ATP.

The protein belongs to the UMP kinase family. Homohexamer.

Its subcellular location is the cytoplasm. It carries out the reaction UMP + ATP = UDP + ADP. Its pathway is pyrimidine metabolism; CTP biosynthesis via de novo pathway; UDP from UMP (UMPK route): step 1/1. Its activity is regulated as follows. Inhibited by UTP. Functionally, catalyzes the reversible phosphorylation of UMP to UDP. The chain is Uridylate kinase from Pyrobaculum neutrophilum (strain DSM 2338 / JCM 9278 / NBRC 100436 / V24Sta) (Thermoproteus neutrophilus).